The primary structure comprises 545 residues: Glucose-6-phosphate isomerase (545 aa).

The Proton donor role is filled by Glu351. Residues His382 and Lys510 contribute to the active site.

The protein belongs to the GPI family.

Its subcellular location is the cytoplasm. It catalyses the reaction alpha-D-glucose 6-phosphate = beta-D-fructose 6-phosphate. The protein operates within carbohydrate biosynthesis; gluconeogenesis. It participates in carbohydrate degradation; glycolysis; D-glyceraldehyde 3-phosphate and glycerone phosphate from D-glucose: step 2/4. Catalyzes the reversible isomerization of glucose-6-phosphate to fructose-6-phosphate. This chain is Glucose-6-phosphate isomerase, found in Shewanella sediminis (strain HAW-EB3).